The primary structure comprises 234 residues: Sperm flagellar protein 1 (234 aa).

Residues Glu-7–Glu-112 enclose the Calponin-homology (CH) domain. Residues Val-181–Arg-234 are essential for homodimerization and microtubule bundling activity.

Homodimer. Interacts with actin, TJP1, CGN and CDH1. Expressed predominantly in the seminiferous epithelium of adult testis. Expressed in pillar cells of the organ of Corti (at protein level). Expressed in brain, kidney, lung and testis. Highly expressed in the trachea, lung and oviduct.

It is found in the cytoplasm. Its subcellular location is the cell projection. The protein localises to the cilium. It localises to the flagellum. The protein resides in the cytoskeleton. It is found in the cilium axoneme. Its subcellular location is the apical cell membrane. The protein localises to the basolateral cell membrane. It localises to the stress fiber. The protein resides in the microvillus. It is found in the lamellipodium. Its subcellular location is the filopodium. Its function is as follows. Microtubule-associated protein that promotes microtubule bundling and stabilizes microtubules against depolymerization in response to cold shock. Microtubule-associated protein involved in the stabilization of microtubules along the axis of migration during radial intercalation. Promotes the establishment and stabilization of an axis of microtubules required for the active migration of cells into the outer epithelium. Essential for ciliary central apparatus formation which requires both its microtubule-binding and bundling activities and for ciliary localization of HYDIN and SPAG6 in ependymal cilia. Binds actin in intestinal epithelial cells (IECs), essential for IECs survival and contributes to formation of filopodia and lamellipodia in migrating IECs. Regulates planar cell polarity signaling pathway and asymmetric microtubule accumulation in ciliated epithelia. The sequence is that of Sperm flagellar protein 1 (Spef1) from Mus musculus (Mouse).